The chain runs to 181 residues: Bifunctional protein PyrR (181 aa).

A PRPP-binding motif is present at residues 101-113 (VIVVDDVLYTGRT).

Belongs to the purine/pyrimidine phosphoribosyltransferase family. PyrR subfamily. In terms of assembly, homodimer and homohexamer; in equilibrium.

The catalysed reaction is UMP + diphosphate = 5-phospho-alpha-D-ribose 1-diphosphate + uracil. In terms of biological role, regulates transcriptional attenuation of the pyrimidine nucleotide (pyr) operon by binding in a uridine-dependent manner to specific sites on pyr mRNA. This disrupts an antiterminator hairpin in the RNA and favors formation of a downstream transcription terminator, leading to a reduced expression of downstream genes. Functionally, also displays a weak uracil phosphoribosyltransferase activity which is not physiologically significant. The sequence is that of Bifunctional protein PyrR from Bacillus velezensis (strain DSM 23117 / BGSC 10A6 / LMG 26770 / FZB42) (Bacillus amyloliquefaciens subsp. plantarum).